Here is a 379-residue protein sequence, read N- to C-terminus: UDP-4-amino-4-deoxy-L-arabinose--oxoglutarate aminotransferase (379 aa).

Residue Lys182 is modified to N6-(pyridoxal phosphate)lysine.

It belongs to the DegT/DnrJ/EryC1 family. ArnB subfamily. In terms of assembly, homodimer. Pyridoxal 5'-phosphate serves as cofactor.

It carries out the reaction UDP-4-amino-4-deoxy-beta-L-arabinose + 2-oxoglutarate = UDP-beta-L-threo-pentopyranos-4-ulose + L-glutamate. Its pathway is nucleotide-sugar biosynthesis; UDP-4-deoxy-4-formamido-beta-L-arabinose biosynthesis; UDP-4-deoxy-4-formamido-beta-L-arabinose from UDP-alpha-D-glucuronate: step 2/3. The protein operates within bacterial outer membrane biogenesis; lipopolysaccharide biosynthesis. Catalyzes the conversion of UDP-4-keto-arabinose (UDP-Ara4O) to UDP-4-amino-4-deoxy-L-arabinose (UDP-L-Ara4N). The modified arabinose is attached to lipid A and is required for resistance to polymyxin and cationic antimicrobial peptides. The protein is UDP-4-amino-4-deoxy-L-arabinose--oxoglutarate aminotransferase of Shigella flexneri.